The chain runs to 286 residues: Shikimate dehydrogenase (NADP(+)) (286 aa).

Shikimate-binding positions include 25 to 27 and threonine 72; that span reads SLS. Lysine 76 serves as the catalytic Proton acceptor. Glutamate 88 is a binding site for NADP(+). Asparagine 97 and aspartate 113 together coordinate shikimate. NADP(+) is bound by residues 138–142, 162–167, and isoleucine 232; these read GSGGA and NRTIER. A shikimate-binding site is contributed by tyrosine 234. Residue glycine 255 participates in NADP(+) binding.

It belongs to the shikimate dehydrogenase family. In terms of assembly, homodimer.

It catalyses the reaction shikimate + NADP(+) = 3-dehydroshikimate + NADPH + H(+). It functions in the pathway metabolic intermediate biosynthesis; chorismate biosynthesis; chorismate from D-erythrose 4-phosphate and phosphoenolpyruvate: step 4/7. Functionally, involved in the biosynthesis of the chorismate, which leads to the biosynthesis of aromatic amino acids. Catalyzes the reversible NADPH linked reduction of 3-dehydroshikimate (DHSA) to yield shikimate (SA). This chain is Shikimate dehydrogenase (NADP(+)), found in Magnetococcus marinus (strain ATCC BAA-1437 / JCM 17883 / MC-1).